A 959-amino-acid polypeptide reads, in one-letter code: General transcription factor II-I repeat domain-containing protein 1 (959 aa).

Glycyl lysine isopeptide (Lys-Gly) (interchain with G-Cter in SUMO2) cross-links involve residues Lys27 and Lys94. Over residues 96-106 the composition is skewed to basic and acidic residues; it reads PEAEHPKKVQR. A disordered region spans residues 96–117; the sequence is PEAEHPKKVQRGEGGGRSLPRS. The GTF2I-like 1 repeat unit spans residues 119–213; that stretch reads LEHGSDVYLL…LEDGGRDSKA (95 aa). Glycyl lysine isopeptide (Lys-Gly) (interchain with G-Cter in SUMO2) cross-links involve residues Lys184, Lys212, Lys225, Lys238, Lys271, Lys294, Lys308, Lys337, Lys436, Lys439, and Lys443. The segment at 230 to 250 is disordered; the sequence is CGLHGQAPKVPPQDLPPTATS. One copy of the GTF2I-like 2 repeat lies at 342–436; that stretch reads IKETEDINTL…FDERIFTGNK (95 aa). Ser448 carries the phosphoserine modification. The interval 468 to 492 is disordered; it reads NARSDKGSMSEDCGPGTSGELGGLR. The stretch at 556 to 650 is one GTF2I-like 3 repeat; it reads DSHGDVIRPL…ELLTEGVKEP (95 aa). Residues Lys567, Lys579, Lys588, Lys622, Lys638, and Lys648 each participate in a glycyl lysine isopeptide (Lys-Gly) (interchain with G-Cter in SUMO2) cross-link. A Phosphoserine modification is found at Ser654. Positions 654–679 are disordered; the sequence is SQGTASSLGFSPPALPPERDSGDPLV. Residues Pro669, Pro670, Asp680, and Lys684 each participate in a glycyl lysine isopeptide (Lys-Gly) (interchain with G-Cter in SUMO2) cross-link. Gln686 is subject to Phosphoserine. GTF2I-like repeat units follow at residues 696–790 and 793–887; these read LSRI…KPDE and ANRL…ICND. Residues Ile701, Lys724, Lys732, Lys772, Lys774, Lys787, Lys829, Lys889, and Lys893 each participate in a glycyl lysine isopeptide (Lys-Gly) (interchain with G-Cter in SUMO2) cross-link. Positions 892 to 927 are disordered; that stretch reads AKDSSIPKRKRKRVSEGNSVSSSSSSSSSSSSNPDS. The Nuclear localization signal signature appears at 898 to 905; that stretch reads PKRKRKRV. The segment covering 910-923 has biased composition (low complexity); sequence SVSSSSSSSSSSSS.

This sequence belongs to the TFII-I family. Interacts with the retinoblastoma protein (RB1) via its C-terminus. In terms of tissue distribution, highly expressed in adult skeletal muscle, heart, fibroblast, bone and fetal tissues. Expressed at lower levels in all other tissues tested.

Its subcellular location is the nucleus. In terms of biological role, may be a transcription regulator involved in cell-cycle progression and skeletal muscle differentiation. May repress GTF2I transcriptional functions, by preventing its nuclear residency, or by inhibiting its transcriptional activation. May contribute to slow-twitch fiber type specificity during myogenesis and in regenerating muscles. Binds troponin I slow-muscle fiber enhancer (USE B1). Binds specifically and with high affinity to the EFG sequences derived from the early enhancer of HOXC8. The protein is General transcription factor II-I repeat domain-containing protein 1 (GTF2IRD1) of Homo sapiens (Human).